Here is an 89-residue protein sequence, read N- to C-terminus: MANNMVASPYKNTFMMIALVLILLISGSEARSNGIYDPMCPGVCGNLVKPDCNGLCHELGFPAGGYCKPGNTCCCKKKDSGPVDVPPTA.

The N-terminal stretch at 1–30 is a signal peptide; the sequence is MANNMVASPYKNTFMMIALVLILLISGSEA. 4 disulfides stabilise this stretch: cysteine 40–cysteine 75, cysteine 44–cysteine 67, cysteine 52–cysteine 73, and cysteine 56–cysteine 74.

Belongs to the DEFL family.

The protein resides in the secreted. The protein is Defensin-like protein 78 of Arabidopsis thaliana (Mouse-ear cress).